The sequence spans 481 residues: tRNA-2-methylthio-N(6)-dimethylallyladenosine synthase (481 aa).

Positions 24 to 140 (KKLFIESYGC…LPNLLNEVEE (117 aa)) constitute an MTTase N-terminal domain. [4Fe-4S] cluster contacts are provided by Cys-33, Cys-69, Cys-103, Cys-178, Cys-182, and Cys-185. The Radical SAM core domain maps to 164-411 (MSNGITALVA…DLQQKHAWWR (248 aa)). Positions 413-476 (EDFIGQTVEV…SGTLKGEAVG (64 aa)) constitute a TRAM domain.

This sequence belongs to the methylthiotransferase family. MiaB subfamily. As to quaternary structure, monomer. [4Fe-4S] cluster serves as cofactor.

Its subcellular location is the cytoplasm. The catalysed reaction is N(6)-dimethylallyladenosine(37) in tRNA + (sulfur carrier)-SH + AH2 + 2 S-adenosyl-L-methionine = 2-methylsulfanyl-N(6)-dimethylallyladenosine(37) in tRNA + (sulfur carrier)-H + 5'-deoxyadenosine + L-methionine + A + S-adenosyl-L-homocysteine + 2 H(+). Functionally, catalyzes the methylthiolation of N6-(dimethylallyl)adenosine (i(6)A), leading to the formation of 2-methylthio-N6-(dimethylallyl)adenosine (ms(2)i(6)A) at position 37 in tRNAs that read codons beginning with uridine. In Flavobacterium psychrophilum (strain ATCC 49511 / DSM 21280 / CIP 103535 / JIP02/86), this protein is tRNA-2-methylthio-N(6)-dimethylallyladenosine synthase.